The chain runs to 90 residues: Probable Fe(2+)-trafficking protein (90 aa).

This sequence belongs to the Fe(2+)-trafficking protein family. In terms of assembly, monomer.

Functionally, could be a mediator in iron transactions between iron acquisition and iron-requiring processes, such as synthesis and/or repair of Fe-S clusters in biosynthetic enzymes. In Serratia proteamaculans (strain 568), this protein is Probable Fe(2+)-trafficking protein.